The sequence spans 337 residues: HTH-type transcriptional repressor PurR (337 aa).

Residues 2–56 (ATIKDVAKLAAVSTTTVSHVINKTRFVAEATQKRVWEAVEELNYAPSAVARSLKC) form the HTH lacI-type domain. The segment at residues 4–23 (IKDVAKLAAVSTTTVSHVIN) is a DNA-binding region (H-T-H motif). The DNA-binding element occupies 48–56 (SAVARSLKC). Hypoxanthine contacts are provided by Phe73, Lys189, Thr191, Phe220, and Asp276.

As to quaternary structure, homodimer.

The protein operates within purine metabolism; purine nucleotide biosynthesis [regulation]. Its function is as follows. Is the main repressor of the genes involved in the de novo synthesis of purine nucleotides, regulating purB, purC, purEK, purF, purHD, purL, purMN and guaBA expression. PurR is allosterically activated to bind its cognate DNA by binding the purine corepressors, hypoxanthine or guanine, thereby effecting transcription repression. The polypeptide is HTH-type transcriptional repressor PurR (Aliivibrio fischeri (strain ATCC 700601 / ES114) (Vibrio fischeri)).